A 175-amino-acid polypeptide reads, in one-letter code: Translation initiation factor IF-3 (175 aa).

Belongs to the IF-3 family. In terms of assembly, monomer.

The protein resides in the cytoplasm. Functionally, IF-3 binds to the 30S ribosomal subunit and shifts the equilibrium between 70S ribosomes and their 50S and 30S subunits in favor of the free subunits, thus enhancing the availability of 30S subunits on which protein synthesis initiation begins. In Blochmanniella floridana, this protein is Translation initiation factor IF-3.